The sequence spans 263 residues: UPF0246 protein Strop_2927 (263 aa).

This sequence belongs to the UPF0246 family.

The sequence is that of UPF0246 protein Strop_2927 from Salinispora tropica (strain ATCC BAA-916 / DSM 44818 / JCM 13857 / NBRC 105044 / CNB-440).